A 361-amino-acid polypeptide reads, in one-letter code: Peptide chain release factor 1 (361 aa).

Position 235 is an N5-methylglutamine (Gln235). The segment at 287-309 (QKEASAMRSAQVGSGDRSERIRT) is disordered.

Belongs to the prokaryotic/mitochondrial release factor family. In terms of processing, methylated by PrmC. Methylation increases the termination efficiency of RF1.

It localises to the cytoplasm. Its function is as follows. Peptide chain release factor 1 directs the termination of translation in response to the peptide chain termination codons UAG and UAA. The sequence is that of Peptide chain release factor 1 from Chlamydia caviae (strain ATCC VR-813 / DSM 19441 / 03DC25 / GPIC) (Chlamydophila caviae).